A 66-amino-acid chain; its full sequence is Sarcoplasmic/endoplasmic reticulum calcium ATPase regulator ARLN (66 aa).

The residue at position 1 (methionine 1) is an N-acetylmethionine. The interval 1-38 (MEVDVPGVDGRDGLRERRGLSEGGRQNLDVRPQSGANG) is disordered. The span at 9–20 (DGRDGLRERRGL) shows a compositional bias: basic and acidic residues. Residues 45–65 (WLDLWLFIFFDVVVFLFVYFL) form a helical membrane-spanning segment.

As to quaternary structure, homooligomer. Can also form heterooligomers with other sarcoplasmic/endoplasmic reticulum calcium ATPase (SERCA) regulators ERLN, PLN, SLN and STRIT1/DWORF. Monomer. Interacts as a monomer with ATP2A2/SERCA2; the interaction results in inhibition of ATP2A2 Ca(2+) affinity.

The protein resides in the endoplasmic reticulum membrane. Its function is as follows. Inhibits the activity of the calcium ATPases ATP2A2/SERCA2 and ATP2A3/SERCA3 by decreasing their apparent affinity for Ca(2+). In Pongo abelii (Sumatran orangutan), this protein is Sarcoplasmic/endoplasmic reticulum calcium ATPase regulator ARLN (ARLN).